Reading from the N-terminus, the 38-residue chain is uncharacterized protein (38 aa).

This is an uncharacterized protein from Haemophilus influenzae (strain ATCC 51907 / DSM 11121 / KW20 / Rd).